We begin with the raw amino-acid sequence, 191 residues long: MGGSGSRLSKELLAEYQDLTFLTKQEILLAHRRFCELLPQEHRSVEESLQARVSLEQILSLPELKANPFKERICKVFSTSPSRDSLSFEDFLDLLSVFSDTATPDIKSHYAFRIFDFDDDGTLNREDLSQLVNCLTGESEDTRLSASEMKQLIDNILEESDIDRDGTINLSEFQHVISRSPDFASSFKIVL.

Residue Gly-2 is the site of N-myristoyl glycine attachment. EF-hand domains follow at residues 103–138 (TPDI…LTGE) and 148–183 (EMKQ…SPDF). Residues Asp-116, Asp-118, Asp-120, Thr-122, Asp-127, Asp-161, Asp-163, Asp-165, Thr-167, and Glu-172 each coordinate Ca(2+).

As to quaternary structure, monomer. Interacts with the heterodimeric integrin alpha-IIb/beta3 (ITGA2B-ITGB3). Interacts with ITGA2B (via cytoplasmic domain); the interaction is direct and calcium-dependent. Interacts with the protein kinases PLK2/SNK and PRKDC (via the region immediately upstream of the kinase domain). Interacts with PLK3; the interaction inhibits PLK3 kinase activity. Interacts with PSEN2. Interacts (via C-terminus) with F8. Interacts with NBR1 (via C-terminus). Interacts with FEZ1 (via C-terminus). Interacts with UBR5 (via C-terminus); the interaction is sensitive to DNA damage, and may target CIB1 for ubiquitin-mediated degradation. Interacts with IFI6; the interaction is direct. Interacts with BCL2. Interacts with ITPR3; the interaction occurs in a calcium dependent manner. Interacts with PTK2/FAK1. Interacts with MAP3K5; the interaction inhibits MAP3K5 activation by phosphorylation, and its subsequent interaction with TRAF2. Interacts (via C-terminal region) with STMN2 (via the N-terminal region); the interaction is direct, occurs in a calcium-dependent manner and attenuates the STMN2-induced neurite outgrowth inhibition. Interacts with SPHK1, the interaction occurs in a calcium-dependent manner. Interacts with ITGA2B (via C-terminal cytoplasmic tail); the interaction occurs upon platelet aggregation and is stabilized/increased in a calcium and magnesium-dependent manner. Interacts with PAK1 (via N-terminal region); the interaction is direct and occurs in a calcium-dependent manner. Interacts with RAC3 (via C-terminal region); the interaction induces their association with the cytoskeleton upon alpha-IIb/beta3 integrin-mediated adhesion. Interacts with ITGA5 and ITGAV. Interacts with MYO1C. Interacts with ITGA2B (via C-terminal cytoplasmic tail region). Interacts (via C-terminal region) with PPP3R1; the interaction increases upon cardiomyocytes hypertrophy. Interacts with CACNA1C; the interaction increases upon cardiomyocytes hypertrophy. Interacts with TAS1R2 (via C-terminus); this interaction is independent of the myristoylation state of CIB1. Interacts and forms a complex with TMC6 and TMC8; the interaction stabilizes each component of the complex.

It is found in the membrane. It localises to the cell membrane. Its subcellular location is the sarcolemma. The protein localises to the apical cell membrane. The protein resides in the cell projection. It is found in the ruffle membrane. It localises to the filopodium tip. Its subcellular location is the growth cone. The protein localises to the lamellipodium. The protein resides in the cytoplasm. It is found in the cytoskeleton. It localises to the microtubule organizing center. Its subcellular location is the centrosome. The protein localises to the perinuclear region. The protein resides in the nucleus. It is found in the neuron projection. It localises to the perikaryon. Functionally, calcium-binding protein that plays a role in the regulation of numerous cellular processes, such as cell differentiation, cell division, cell proliferation, cell migration, thrombosis, angiogenesis, cardiac hypertrophy and apoptosis. Involved in bone marrow megakaryocyte differentiation by negatively regulating thrombopoietin-mediated signaling pathway. Participates in the endomitotic cell cycle of megakaryocyte, a form of mitosis in which both karyokinesis and cytokinesis are interrupted. Plays a role in integrin signaling by negatively regulating alpha-IIb/beta3 activation in thrombin-stimulated megakaryocytes preventing platelet aggregation. Up-regulates PTK2/FAK1 activity, and is also needed for the recruitment of PTK2/FAK1 to focal adhesions; it thus appears to play an important role in focal adhesion formation. Positively regulates cell migration on fibronectin in a CDC42-dependent manner, the effect being negatively regulated by PAK1. Functions as a negative regulator of stress activated MAP kinase (MAPK) signaling pathways. Down-regulates inositol 1,4,5-trisphosphate receptor-dependent calcium signaling. Involved in sphingosine kinase SPHK1 translocation to the plasma membrane in a N-myristoylation-dependent manner preventing TNF-alpha-induced apoptosis. Regulates serine/threonine-protein kinase PLK3 activity for proper completion of cell division progression. Plays a role in microtubule (MT) dynamics during neuronal development; disrupts the MT depolymerization activity of STMN2 attenuating NGF-induced neurite outgrowth and the MT reorganization at the edge of lamellipodia. Promotes cardiomyocyte hypertrophy via activation of the calcineurin/NFAT signaling pathway. Stimulates calcineurin PPP3R1 activity by mediating its anchoring to the sarcolemma. In ischemia-induced (pathological or adaptive) angiogenesis, stimulates endothelial cell proliferation, migration and microvessel formation by activating the PAK1 and ERK1/ERK2 signaling pathway. Also promotes cancer cell survival and proliferation. May regulate cell cycle and differentiation of spermatogenic germ cells, and/or differentiation of supporting Sertoli cells. Forms a complex with TMC6/EVER1 and TMC8/EVER2 in lymphocytes and keratynocytes where CIB1 stabilizes TMC6 and TMC8 levels and reciprocally. The chain is Calcium and integrin-binding protein 1 (CIB1) from Bos taurus (Bovine).